A 326-amino-acid polypeptide reads, in one-letter code: Zinc finger CCCH domain-containing protein 15 (326 aa).

Residues 1 to 14 (MADGGGGGEAGSGG) are compositionally biased toward gly residues. The disordered stretch occupies residues 1–142 (MADGGGGGEA…SSSGSGSGEV (142 aa)). The span at 24–33 (KPPKNIRKRP) shows a compositional bias: basic residues. Residues 47-64 (SGAIAAARAKKAPSSTSK) show a composition bias toward low complexity. Residues 81-100 (YESSRTIQASTDSRATATLE) show a composition bias toward polar residues. Basic and acidic residues predominate over residues 104–125 (EFDRDARAIRERQLKQAEESLK). The segment at 187–215 (DYQPDICKDYKETGYCGYGDSCKFMHDRG) adopts a C3H1-type zinc-finger fold. The RING-type zinc-finger motif lies at 265–303 (CYICREPFVDPVVTKCKHYFCEHCALKHHSKNKKCFVCN).

The sequence is that of Zinc finger CCCH domain-containing protein 15 from Oryza sativa subsp. japonica (Rice).